Here is a 306-residue protein sequence, read N- to C-terminus: MGKIKNKIVRQQQYMKALHQKNKDKLERRKERAKEEEKDPEKKRLRLSENIPATIESKRVYDETIIEDKPDEELQAELKDDEFSAYFSEERKVPKLLVTTSKRASRKCYDFASELLDCFPNAEFRKRTGDIEVHEIAEAAAKRGYTDLLVLNEDRKKTNALTLVHLPNGPSFYFTLSNLQTAKEISNHGRSTGHIPELIINNFSTRLGMTVARAFQSLFIQTPQIQGRQVVTIHCQRDFLFFRRHRYAFREKSNMPDGIGTGLQELGPRFTMRLRMVQKGVWDRKEGEVFFESNAGEESDRRKFWL.

The disordered stretch occupies residues 16–49 (KALHQKNKDKLERRKERAKEEEKDPEKKRLRLSE). Residues 21–42 (KNKDKLERRKERAKEEEKDPEK) show a composition bias toward basic and acidic residues. Positions 94-283 (PKLLVTTSKR…LRMVQKGVWD (190 aa)) constitute a Brix domain.

The polypeptide is Brix domain-containing protein C4F8.04 (Schizosaccharomyces pombe (strain 972 / ATCC 24843) (Fission yeast)).